The primary structure comprises 174 residues: Putative NADH dehydrogenase/NAD(P)H nitroreductase AF_2267 (174 aa).

107-112 provides a ligand contact to NAD(+); that stretch reads AARCLG.

This sequence belongs to the nitroreductase family. FMN serves as cofactor.

The sequence is that of Putative NADH dehydrogenase/NAD(P)H nitroreductase AF_2267 from Archaeoglobus fulgidus (strain ATCC 49558 / DSM 4304 / JCM 9628 / NBRC 100126 / VC-16).